Reading from the N-terminus, the 331-residue chain is UBX domain-containing protein 2B (331 aa).

Disordered stretches follow at residues 1–26 (MAEG…SARD) and 38–63 (EMKC…PPLR). Alanine 2 is subject to N-acetylalanine. Residues 38–48 (EMKCKSSKPDR) are compositionally biased toward basic and acidic residues. Serine 56 bears the Phosphoserine mark. Threonine 59 bears the Phosphothreonine mark. Serine 66 carries the phosphoserine modification. In terms of domain architecture, SEP spans 141-206 (DVQILLRLWS…MEDHQDQEYI (66 aa)). Phosphoserine is present on residues serine 231, serine 234, and serine 235. A UBX domain is found at 252–329 (DSVPTTKIQI…DILNTVILQQ (78 aa)).

Belongs to the NSFL1C family. As to quaternary structure, interacts with VCP. Does not bind ubiquitin. As to expression, present at high level in brain. Also present in liver, kidney, spleen, testis, lung and heart (at protein level).

It localises to the nucleus. The protein resides in the cytoplasm. The protein localises to the cytosol. It is found in the endoplasmic reticulum. Its subcellular location is the golgi apparatus. It localises to the cytoskeleton. The protein resides in the microtubule organizing center. The protein localises to the centrosome. Adapter protein required for Golgi and endoplasmic reticulum biogenesis. Involved in Golgi and endoplasmic reticulum maintenance during interphase and in their reassembly at the end of mitosis. The complex formed with VCP has membrane fusion activity; membrane fusion activity requires USO1-GOLGA2 tethering and BET1L. VCPIP1 is also required, but not its deubiquitinating activity. Together with NSFL1C/p47, regulates the centrosomal levels of kinase AURKA/Aurora A during mitotic progression by promoting AURKA removal from centrosomes in prophase. Also, regulates spindle orientation during mitosis. This Rattus norvegicus (Rat) protein is UBX domain-containing protein 2B (Ubxn2b).